We begin with the raw amino-acid sequence, 149 residues long: Alpha-crystallin A chain (149 aa).

The sHSP domain maps to 28 to 138; sequence LLRGFMDSGI…SHSERPIPVS (111 aa). The Zn(2+) site is built by histidine 55, histidine 76, glutamate 78, histidine 83, histidine 91, and histidine 130. The segment at 125–149 is disordered; the sequence is NLVSSHSERPIPVSREEKPTSAPSS. The span at 130–143 shows a compositional bias: basic and acidic residues; it reads HSERPIPVSREEKP. A glycan (O-linked (GlcNAc) serine) is linked at serine 138.

Belongs to the small heat shock protein (HSP20) family. As to quaternary structure, heteropolymer composed of three CRYAA and one CRYAB subunits. Inter-subunit bridging via zinc ions enhances stability, which is crucial as there is no protein turn over in the lens. Can also form homodimers and homotetramers (dimers of dimers) which serve as the building blocks of homooligomers. Within homooligomers, the zinc-binding motif is created from residues of 3 different molecules. His-76 and Glu-78 from one molecule are ligands of the zinc ion, and His-83 and His-130 residues from additional molecules complete the site with tetrahedral coordination geometry.

It is found in the cytoplasm. The protein resides in the nucleus. In terms of biological role, contributes to the transparency and refractive index of the lens. May act as a chaperone, preventing aggregation of various proteins under a wide range of stress conditions. The chain is Alpha-crystallin A chain (CRYAA) from Rana temporaria (European common frog).